The sequence spans 951 residues: MAATGNEEQTLLPDIEEEAEGMEREMESEDDEEEGMGVEHSEEEDEEDTSEDERENEAEIQRLEEQLSINAFDYNCHVDLIKLLRQEGKLHRLRKARQKMSELFPLTEEIWLDWLKDEIRITEDESDREKVYELFERAIKDYVCPEIWLEYVQYSIGGMGAQGGIERVRSIFERALTAVGLHMTKGASIWEAYREFEIVILSTVQPPPGTVPSQEQQELLSAQLERIHTLFRRQLAVPLMDMEGTYAEYSDWADDGVPETVTHQYRRALQQMEKGKPYEEALLVSEPPKLAEYQSYIDFEIKEGDPARVQIIFERALAENCLVPDLWIKYTTYLDRQLKIKDLVLSAHERAVRNCPWTMGLWKSYLLALERHGADHQTVKDVFEKALNAGFIQATDYVEIWQSYLDYLRRRVDFSKEWSRELDELRAAFSRSLEYLKQDVEERFSESGDLSCTLMQIWARIEALHCKNMQKARELWDSIMTKGNAKYANMWLEYYNLERSYGDAAHCRKALHRAVQCTSDYPEHVCDVLLNFERVEGSLEDWDAAVQKTETKLNRVCEQRARVAEKEALHARQEEEKAEQRRKVKADKKAQKKGQKANRTGDKRKAEDDDEEEWGEEAELPSKRLRGEDDFDSTVTEELMETESGLFGRRAPPARKTEPPGFRKNQQGAPEPQRQPHDMPKEQRKDENCVFVSNLTFNMEDPEGKLRTLFQGCGTIQQVRPVFTAKGTFRGYCYVQFEDRLAVPEALKMDRQEVDGRPMYVSPCVDKNKNPDFKVFKYKTSMEKHKIFISGLPYSATKETLEDLCKEHGTIRAIRIVTNRSGKSKGLAYVEFEDEAQASQAVLKMDGTMLENFTLSVAISNPPGRRMKDEAAPSRFLGAAMPRQLQGARGKGRTQISLLPRSLYRQSTPDAKAENGTISAPHATVTDGETSLDTQTKSLSNEDFARMLLKK.

The interval 1-58 is disordered; it reads MAATGNEEQTLLPDIEEEAEGMEREMESEDDEEEGMGVEHSEEEDEEDTSEDERENEA. Residues 14-56 show a composition bias toward acidic residues; the sequence is DIEEEAEGMEREMESEDDEEEGMGVEHSEEEDEEDTSEDEREN. 8 HAT repeats span residues 88–120, 126–157, 163–199, 222–255, 304–336, 339–371, 374–410, and 467–500; these read GKLHRLRKARQKMSELFPLTEEIWLDWLKDEIR, SDREKVYELFERAIKDYVCPEIWLEYVQYSIG, GGIERVRSIFERALTAVGLHMTKGASIWEAYREFEIV, AQLERIHTLFRRQLAVPLMDMEGTYAEYSDWADD, GDPARVQIIFERALAENCLVPDLWIKYTTYLDR, KIKDLVLSAHERAVRNCPWTMGLWKSYLLALER, ADHQTVKDVFEKALNAGFIQATDYVEIWQSYLDYLRR, and KNMQKARELWDSIMTKGNAKYANMWLEYYNLERS. Residues 517–941 are necessary and sufficient for U6 snRNA binding; it reads CTSDYPEHVC…LDTQTKSLSN (425 aa). Positions 533–593 form a coiled coil; that stretch reads ERVEGSLEDW…VKADKKAQKK (61 aa). Residues 567–581 are compositionally biased toward basic and acidic residues; the sequence is EALHARQEEEKAEQR. Residues 567-686 form a disordered region; sequence EALHARQEEE…HDMPKEQRKD (120 aa). The span at 582–596 shows a compositional bias: basic residues; it reads RKVKADKKAQKKGQK. The span at 608–619 shows a compositional bias: acidic residues; the sequence is DDDEEEWGEEAE. Residues 674-686 are compositionally biased toward basic and acidic residues; it reads RQPHDMPKEQRKD. 2 consecutive RRM domains span residues 688–766 and 785–862; these read NCVF…PCVD and HKIF…ISNP. The interval 905–938 is disordered; sequence RQSTPDAKAENGTISAPHATVTDGETSLDTQTKS. Residues 927 to 938 show a composition bias toward polar residues; the sequence is DGETSLDTQTKS.

It localises to the nucleus. The protein resides in the nucleoplasm. It is found in the cajal body. The protein localises to the nucleus speckle. Its subcellular location is the cytoplasm. U6 snRNP-binding protein that functions as a recycling factor of the splicing machinery. Promotes the initial reassembly of U4 and U6 snRNPs following their ejection from the spliceosome during its maturation. May also function as a substrate targeting factor for deubiquitinases and mediate the deubiquitination of components of the spliceosome and histones. The sequence is that of Spliceosome associated factor 3, U4/U6 recycling protein from Danio rerio (Zebrafish).